We begin with the raw amino-acid sequence, 209 residues long: Peroxynitrite isomerase 2 (209 aa).

Positions 56-62 (GVWRGEG) match the GXWXGXG motif. Heme b contacts are provided by lysine 172 and histidine 199.

The protein belongs to the nitrobindin family. Homodimer. It depends on heme b as a cofactor.

The enzyme catalyses peroxynitrite = nitrate. Its pathway is nitrogen metabolism. In terms of biological role, heme-binding protein able to scavenge peroxynitrite and to protect free L-tyrosine against peroxynitrite-mediated nitration, by acting as a peroxynitrite isomerase that converts peroxynitrite to nitrate. Therefore, this protein likely plays a role in peroxynitrite sensing and in the detoxification of reactive nitrogen and oxygen species (RNS and ROS, respectively). Is able to bind nitric oxide (NO) in vitro, but may act as a sensor of peroxynitrite levels in vivo. This Mycolicibacterium vanbaalenii (strain DSM 7251 / JCM 13017 / BCRC 16820 / KCTC 9966 / NRRL B-24157 / PYR-1) (Mycobacterium vanbaalenii) protein is Peroxynitrite isomerase 2.